We begin with the raw amino-acid sequence, 644 residues long: Kininogen-1 (644 aa).

The N-terminal stretch at 1 to 18 (MKLITILFLCSRLLLSLT) is a signal peptide. Gln19 bears the Pyrrolidone carboxylic acid; in mature form mark. One can recognise a Cystatin kininogen-type 1 domain in the interval 28–132 (CNDKDLFKAV…TQTCQITPAE (105 aa)). 9 disulfide bridges follow: Cys28–Cys614, Cys83–Cys94, Cys107–Cys126, Cys142–Cys145, Cys206–Cys218, Cys229–Cys248, Cys264–Cys267, Cys328–Cys340, and Cys351–Cys370. An N-linked (GlcNAc...) (complex) asparagine glycan is attached at Asn48. The tract at residues 120 to 153 (SVATQTCQITPAEGPVVTAQYDCLGCVHPISTQS) is O-glycosylated at one site only. Residues 151-254 (TQSPDLEPIL…SQNCDIYPGK (104 aa)) form the Cystatin kininogen-type 2 domain. Residue Asn169 is glycosylated (N-linked (GlcNAc...) asparagine). A glycan (N-linked (GlcNAc...) (complex) asparagine) is linked at Asn205. Positions 273–376 (TNSPELEETL…TVNCQPLGMI (104 aa)) constitute a Cystatin kininogen-type 3 domain. N-linked (GlcNAc...) (complex) asparagine glycosylation occurs at Asn294. At Ser332 the chain carries Phosphoserine; by FAM20C. Pro383 is modified (4-hydroxyproline; partial). A disordered region spans residues 387–555 (PFRSSRIGEI…TPIPSLAKPG (169 aa)). An O-linked (GalNAc...) threonine glycan is attached at Thr401. Positions 418–434 (DSGKEQGHTRRHDWGHE) are enriched in basic and acidic residues. 3 consecutive repeats follow at residues 420-449 (GKEQ…KHER), 450-479 (DQGH…KFKL), and 480-510 (DDDL…KNKG). The segment covering 435–446 (KQRKHNLGHGHK) has biased composition (basic residues). A compositionally biased stretch (basic and acidic residues) spans 477–493 (FKLDDDLEHQGGHVLDH). Residues 494–518 (GHKHKHGHGHGKHKNKGKKNGKHNG) are compositionally biased toward basic residues. Residues 524–539 (LASSSEDSTTPSAQTQ) are compositionally biased toward polar residues. Thr533, Thr542, Thr546, Thr557, and Thr571 each carry an O-linked (GalNAc...) threonine glycan. The O-linked (GalNAc...) serine glycan is linked to Ser577. Thr628 carries O-linked (GalNAc...) threonine glycosylation.

Interacts (high molecular weight kininogen) (via amino acids 402-532) with triafestin-1 and triafestin-2, anticoagulant proteins from Triatoma infestans. Interacts (high molecular weight kininogen) (via amino acids 402-532) with short form salivary protein D7R1, an anticoagulant protein from Anopheles stephensi. Interacts (high molecular weight kininogen) (via amino acids 421-466 and 459-513) with haemaphysalin, an anticoagulant protein from Haemaphysalis longicornis. In terms of processing, bradykinin is inactivated by ACE, which removes the dipeptide Arg-Phe from its C-terminus. Bradykinin is released from kininogen by plasma kallikrein. Post-translationally, hydroxylation of Pro-383 occurs prior to the release of bradykinin. In terms of processing, phosphorylated by FAM20C in the extracellular medium. N- and O-glycosylated. O-glycosylated with core 1 or possibly core 8 glycans. Post-translationally, (Microbial infection) Bradykinin is generated upon proteolytic cleavage by S.pyogenes SpeB to produce hypotension during septic shock. Secreted in plasma. T-kinin is detected in malignant ovarian, colon and breast carcinomas, but not in benign tumors.

The protein resides in the secreted. Its subcellular location is the extracellular space. Its function is as follows. Kininogens are inhibitors of thiol proteases. HMW-kininogen plays an important role in blood coagulation by helping to position optimally prekallikrein and factor XI next to factor XII; HMW-kininogen inhibits the thrombin- and plasmin-induced aggregation of thrombocytes. LMW-kininogen inhibits the aggregation of thrombocytes. LMW-kininogen is in contrast to HMW-kininogen not involved in blood clotting. Functionally, the active peptide bradykinin is a potent vasodilatator that is released from HMW-kininogen shows a variety of physiological effects: (A) influence in smooth muscle contraction, (B) induction of hypotension, (C) natriuresis and diuresis, (D) decrease in blood glucose level, (E) it is a mediator of inflammation and causes (E1) increase in vascular permeability, (E2) stimulation of nociceptors (4E3) release of other mediators of inflammation (e.g. prostaglandins), (F) it has a cardioprotective effect (directly via bradykinin action, indirectly via endothelium-derived relaxing factor action). This is Kininogen-1 (KNG1) from Homo sapiens (Human).